A 397-amino-acid chain; its full sequence is Carbamoyl phosphate synthase small chain (397 aa).

Residues 1 to 204 (MKHVLRKEKT…NAKLKEKIWH (204 aa)) form a CPSase region. Residues Ser57, Gly252, and Gly254 each contribute to the L-glutamine site. Residues 204–391 (HVVVYDFGVK…IKLMKKSYNS (188 aa)) enclose the Glutamine amidotransferase type-1 domain. Cys280 (nucleophile) is an active-site residue. Residues Leu281, Gln284, Asn322, and Tyr325 each coordinate L-glutamine. Residues His364 and Glu366 contribute to the active site.

Belongs to the CarA family. In terms of assembly, composed of two chains; the small (or glutamine) chain promotes the hydrolysis of glutamine to ammonia, which is used by the large (or ammonia) chain to synthesize carbamoyl phosphate. Tetramer of heterodimers (alpha,beta)4.

The enzyme catalyses hydrogencarbonate + L-glutamine + 2 ATP + H2O = carbamoyl phosphate + L-glutamate + 2 ADP + phosphate + 2 H(+). The catalysed reaction is L-glutamine + H2O = L-glutamate + NH4(+). Its pathway is amino-acid biosynthesis; L-arginine biosynthesis; carbamoyl phosphate from bicarbonate: step 1/1. It functions in the pathway pyrimidine metabolism; UMP biosynthesis via de novo pathway; (S)-dihydroorotate from bicarbonate: step 1/3. Small subunit of the glutamine-dependent carbamoyl phosphate synthetase (CPSase). CPSase catalyzes the formation of carbamoyl phosphate from the ammonia moiety of glutamine, carbonate, and phosphate donated by ATP, constituting the first step of 2 biosynthetic pathways, one leading to arginine and/or urea and the other to pyrimidine nucleotides. The small subunit (glutamine amidotransferase) binds and cleaves glutamine to supply the large subunit with the substrate ammonia. This Buchnera aphidicola subsp. Baizongia pistaciae (strain Bp) protein is Carbamoyl phosphate synthase small chain.